The sequence spans 103 residues: Pyrimidine/purine nucleoside phosphorylase (103 aa).

This sequence belongs to the nucleoside phosphorylase PpnP family.

The enzyme catalyses a purine D-ribonucleoside + phosphate = a purine nucleobase + alpha-D-ribose 1-phosphate. It catalyses the reaction adenosine + phosphate = alpha-D-ribose 1-phosphate + adenine. It carries out the reaction cytidine + phosphate = cytosine + alpha-D-ribose 1-phosphate. The catalysed reaction is guanosine + phosphate = alpha-D-ribose 1-phosphate + guanine. The enzyme catalyses inosine + phosphate = alpha-D-ribose 1-phosphate + hypoxanthine. It catalyses the reaction thymidine + phosphate = 2-deoxy-alpha-D-ribose 1-phosphate + thymine. It carries out the reaction uridine + phosphate = alpha-D-ribose 1-phosphate + uracil. The catalysed reaction is xanthosine + phosphate = alpha-D-ribose 1-phosphate + xanthine. Its function is as follows. Catalyzes the phosphorolysis of diverse nucleosides, yielding D-ribose 1-phosphate and the respective free bases. Can use uridine, adenosine, guanosine, cytidine, thymidine, inosine and xanthosine as substrates. Also catalyzes the reverse reactions. The sequence is that of Pyrimidine/purine nucleoside phosphorylase from Geobacter sp. (strain M21).